Here is a 108-residue protein sequence, read N- to C-terminus: T-cell acute lymphocytic leukemia protein 2 homolog (108 aa).

In terms of domain architecture, bHLH spans 2-54 (TRKIFTNTRERWRQQSVNNAFAKLRKLIPTHPPDKKLSKNETLRLAMRYINFL). Residues 76 to 108 (GLFPPKTRLPDEDDRTLLNDYRVPSPGPSHGAP) are disordered.

The protein is T-cell acute lymphocytic leukemia protein 2 homolog (Tal2) of Mus musculus (Mouse).